We begin with the raw amino-acid sequence, 351 residues long: tRNA (guanine(10)-N2)-dimethyltransferase (351 aa).

A THUMP domain is found at Glu57 to Leu165.

The protein belongs to the methyltransferase superfamily. Trm-G10 family. In terms of assembly, monomer.

The protein localises to the cytoplasm. It carries out the reaction guanosine(10) in tRNA + 2 S-adenosyl-L-methionine = N(2)-dimethylguanosine(10) in tRNA + 2 S-adenosyl-L-homocysteine + 2 H(+). Catalyzes the adenosylmethionine-dependent methylation of the exocyclic amino group (N(2)) of guanosine at position 10 of various tRNAs. Acts via a two-step process that leads to the formation of either N(2)-monomethyl (m(2)G) or N(2)-dimethylguanosine (m(2)(2)G). The sequence is that of tRNA (guanine(10)-N2)-dimethyltransferase (trmG10) from Methanocaldococcus jannaschii (strain ATCC 43067 / DSM 2661 / JAL-1 / JCM 10045 / NBRC 100440) (Methanococcus jannaschii).